Reading from the N-terminus, the 177-residue chain is Large ribosomal subunit protein uL22 (177 aa).

Positions 118-177 (VESRPSREGRRGGAGESAGGARARRAQGSKAAAAKKAPASSSTKAATTTEASEEAKGGSQ) are disordered. A compositionally biased stretch (basic and acidic residues) spans 121–130 (RPSREGRRGG). Residues 145-167 (GSKAAAAKKAPASSSTKAATTTE) show a composition bias toward low complexity.

The protein belongs to the universal ribosomal protein uL22 family. Part of the 50S ribosomal subunit.

Its function is as follows. This protein binds specifically to 23S rRNA; its binding is stimulated by other ribosomal proteins, e.g. L4, L17, and L20. It is important during the early stages of 50S assembly. It makes multiple contacts with different domains of the 23S rRNA in the assembled 50S subunit and ribosome. Functionally, the globular domain of the protein is located near the polypeptide exit tunnel on the outside of the subunit, while an extended beta-hairpin is found that lines the wall of the exit tunnel in the center of the 70S ribosome. The sequence is that of Large ribosomal subunit protein uL22 from Mycobacterium sp. (strain JLS).